Consider the following 1342-residue polypeptide: DNA-directed RNA polymerase subunit beta (1342 aa).

This sequence belongs to the RNA polymerase beta chain family. In terms of assembly, the RNAP catalytic core consists of 2 alpha, 1 beta, 1 beta' and 1 omega subunit. When a sigma factor is associated with the core the holoenzyme is formed, which can initiate transcription.

It carries out the reaction RNA(n) + a ribonucleoside 5'-triphosphate = RNA(n+1) + diphosphate. Its function is as follows. DNA-dependent RNA polymerase catalyzes the transcription of DNA into RNA using the four ribonucleoside triphosphates as substrates. This chain is DNA-directed RNA polymerase subunit beta, found in Salmonella typhimurium (strain LT2 / SGSC1412 / ATCC 700720).